The primary structure comprises 624 residues: LEAF RUST 10 DISEASE-RESISTANCE LOCUS RECEPTOR-LIKE PROTEIN KINASE-like 2.2 (624 aa).

Positions 1-30 are cleaved as a signal peptide; sequence MDYLSSMGSQTARFCLILLFLFYYLPCALS. The Extracellular portion of the chain corresponds to 31-263; sequence QDDLWGCGTP…IPNTRSILIT (233 aa). N-linked (GlcNAc...) asparagine glycans are attached at residues N45, N75, N85, N95, N150, and N164. A helical transmembrane segment spans residues 264-284; that stretch reads IGQVVGFHVFIIVVMIIAFLF. Over 285-624 the chain is Cytoplasmic; sequence WRRKKVNDLR…EEDSSIYSEV (340 aa). Residues 317–599 enclose the Protein kinase domain; it reads KSFTEVVGRG…SLDPPPKPLL (283 aa). ATP contacts are provided by residues 323 to 331 and K345; that span reads VGRGGFGTV. The active-site Proton acceptor is the D434. Residues 587-624 form a disordered region; that stretch reads NLDSLDPPPKPLLHMPMQNNNAESSQPSEEDSSIYSEV. Over residues 603-624 the composition is skewed to polar residues; sequence MQNNNAESSQPSEEDSSIYSEV.

This sequence belongs to the protein kinase superfamily. Ser/Thr protein kinase family.

It is found in the membrane. It catalyses the reaction L-seryl-[protein] + ATP = O-phospho-L-seryl-[protein] + ADP + H(+). The enzyme catalyses L-threonyl-[protein] + ATP = O-phospho-L-threonyl-[protein] + ADP + H(+). The polypeptide is LEAF RUST 10 DISEASE-RESISTANCE LOCUS RECEPTOR-LIKE PROTEIN KINASE-like 2.2 (Arabidopsis thaliana (Mouse-ear cress)).